A 76-amino-acid polypeptide reads, in one-letter code: Small ribosomal subunit protein bS18 (76 aa).

The protein belongs to the bacterial ribosomal protein bS18 family. In terms of assembly, part of the 30S ribosomal subunit. Forms a tight heterodimer with protein bS6.

Functionally, binds as a heterodimer with protein bS6 to the central domain of the 16S rRNA, where it helps stabilize the platform of the 30S subunit. This Oceanobacillus iheyensis (strain DSM 14371 / CIP 107618 / JCM 11309 / KCTC 3954 / HTE831) protein is Small ribosomal subunit protein bS18.